The chain runs to 179 residues: Large ribosomal subunit protein uL5 (179 aa).

Belongs to the universal ribosomal protein uL5 family. In terms of assembly, part of the 50S ribosomal subunit; part of the 5S rRNA/L5/L18/L25 subcomplex. Contacts the 5S rRNA and the P site tRNA. Forms a bridge to the 30S subunit in the 70S ribosome.

This is one of the proteins that bind and probably mediate the attachment of the 5S RNA into the large ribosomal subunit, where it forms part of the central protuberance. In the 70S ribosome it contacts protein S13 of the 30S subunit (bridge B1b), connecting the 2 subunits; this bridge is implicated in subunit movement. Contacts the P site tRNA; the 5S rRNA and some of its associated proteins might help stabilize positioning of ribosome-bound tRNAs. This is Large ribosomal subunit protein uL5 from Shewanella piezotolerans (strain WP3 / JCM 13877).